A 236-amino-acid chain; its full sequence is Large ribosomal subunit protein uL2 (236 aa).

The disordered stretch occupies residues 198-236 (DHPFGGGGRQHPGRPKTVSRGTPPGRKVGSIAARRTGKR).

It belongs to the universal ribosomal protein uL2 family. Part of the 50S ribosomal subunit. Forms a bridge to the 30S subunit in the 70S ribosome.

One of the primary rRNA binding proteins. Required for association of the 30S and 50S subunits to form the 70S ribosome, for tRNA binding and peptide bond formation. It has been suggested to have peptidyltransferase activity; this is somewhat controversial. Makes several contacts with the 16S rRNA in the 70S ribosome. The sequence is that of Large ribosomal subunit protein uL2 from Methanothrix thermoacetophila (strain DSM 6194 / JCM 14653 / NBRC 101360 / PT) (Methanosaeta thermophila).